A 917-amino-acid polypeptide reads, in one-letter code: von Willebrand factor A domain-containing protein DDB_G0285975 (917 aa).

Positions 12–51 (DTTTTTTPTTPTTPTTPTTTPTTTTTPTTTPTTTTTSTTP) are disordered. Residues 13-51 (TTTTTTPTTPTTPTTPTTTPTTTTTPTTTPTTTTTSTTP) show a composition bias toward low complexity. Residues 87-215 (RYNTGLKNIS…NVTIHLTIIS (129 aa)) enclose the VIT domain. One can recognise a VWFA domain in the interval 339-507 (EFIFLIDCSG…NFEEQVMKLV (169 aa)). One can recognise a t-SNARE coiled-coil homology domain in the interval 679–741 (LFSSENRNQT…INSIPQKSNI (63 aa)). Composition is skewed to low complexity over residues 751–760 (SPSEVSTSKS) and 774–818 (NNNN…NNNN). Residues 751 to 822 (SPSEVSTSKS…NNNNNNSDNS (72 aa)) form a disordered region.

The polypeptide is von Willebrand factor A domain-containing protein DDB_G0285975 (Dictyostelium discoideum (Social amoeba)).